Consider the following 348-residue polypeptide: Rhodopsin (348 aa).

M1 is subject to N-acetylmethionine. Residues 1–36 (MNGTEGLNFYVPFSNKTGVVRSPFEYPQYYLAEPWQ) are Extracellular-facing. N-linked (GlcNAc...) asparagine glycans are attached at residues N2 and N15. The helical transmembrane segment at 37 to 61 (FSVLAAYMFLLIVLGFPINFLTLYV) threads the bilayer. Residues 62–73 (TVQHKKLRTPLN) are Cytoplasmic-facing. Residues 74 to 96 (YIPLNLAVANLFMVFGGFTTTLY) form a helical membrane-spanning segment. Residues 97 to 110 (TSLHAYFVFGPTGC) lie on the Extracellular side of the membrane. C110 and C187 form a disulfide bridge. A helical transmembrane segment spans residues 111–133 (NLEGFFATLGGEIALWSLVVLAI). A 'Ionic lock' involved in activated form stabilization motif is present at residues 134–136 (ERY). Topologically, residues 134–152 (ERYVVVCKPMSNFRFGENH) are cytoplasmic. Residues 153-173 (AIMGLALTWVMAMACAAPPLV) form a helical membrane-spanning segment. Over 174–202 (GWSRYIPEGMQCSCGIDYYTSRQEVNNES) the chain is Extracellular. Zn(2+) is bound at residue E201. A helical transmembrane segment spans residues 203–224 (FVIYMFVVHFTIPLVIIFFCYG). Residues 225–252 (QLVFTVKEAAAQQQESATTQKAEKEVTR) are Cytoplasmic-facing. Residues 253–274 (MVIIMVVAFLICWVPYASVAFY) traverse the membrane as a helical segment. Topologically, residues 275–286 (IFTHQGSDFGPI) are extracellular. Q279 contributes to the Zn(2+) binding site. Residues 287–308 (FMTIPSFFAKSSSIYNPVIYIM) traverse the membrane as a helical segment. N6-(retinylidene)lysine is present on K296. The Cytoplasmic segment spans residues 309-348 (MNKQLRNCMLTTLCCGRNPLGDDEASTTASKTETSQVAPA). S-palmitoyl cysteine attachment occurs at residues C322 and C323. Residues 330-348 (DDEASTTASKTETSQVAPA) are interaction with SAG. S334 bears the Phosphoserine mark. Phosphothreonine occurs at positions 335 and 336. The residue at position 338 (S338) is a Phosphoserine. T340 and T342 each carry phosphothreonine. S343 is subject to Phosphoserine.

The protein belongs to the G-protein coupled receptor 1 family. Opsin subfamily. Homodimer. May form a complex composed of RHO, GRK1 and RCVRN in a Ca(2+)-dependent manner; RCVRN prevents the interaction between GRK1 and RHO. Interacts with GRK1. Interacts (phosphorylated form) with SAG. Interacts with GNAT1. Interacts with GNAT3. SAG and G-proteins compete for a common binding site. Interacts with PRCD; the interaction promotes PRCD stability. Forms a complex with ASAP1 and ARF4. Forms a complex with ASAP1, RAB11A, Rabin8/RAB3IP, ARF4 and RAB11FIP3; the complex regulates Golgi-to-cilia rhodopsin/RHO transport in photoreceptors. Post-translationally, phosphorylated on some or all of the serine and threonine residues present in the C-terminal region. Contains one covalently linked retinal chromophore. Upon light absorption, the covalently bound 11-cis-retinal is converted to all-trans-retinal. After hydrolysis of the Schiff base and release of the covalently bound all-trans-retinal, active rhodopsin is regenerated by binding of a fresh molecule of 11-cis-retinal.

It localises to the membrane. It is found in the cell projection. The protein resides in the cilium. Its subcellular location is the photoreceptor outer segment. In terms of biological role, photoreceptor required for image-forming vision at low light intensity. Required for photoreceptor cell viability after birth. Light-induced isomerization of 11-cis to all-trans retinal triggers a conformational change that activates signaling via G-proteins. Subsequent receptor phosphorylation mediates displacement of the bound G-protein alpha subunit by the arrestin SAG and terminates signaling. The sequence is that of Rhodopsin (RHO) from Globicephala melas (Long-finned pilot whale).